Reading from the N-terminus, the 137-residue chain is Fluoride-specific ion channel FluC 1 (137 aa).

4 consecutive transmembrane segments (helical) span residues Leu-4–Gly-24, Leu-37–Ile-57, Val-67–Val-87, and Trp-98–Leu-118. Na(+) contacts are provided by Gly-77 and Thr-80.

This sequence belongs to the fluoride channel Fluc/FEX (TC 1.A.43) family.

Its subcellular location is the cell membrane. The enzyme catalyses fluoride(in) = fluoride(out). With respect to regulation, na(+) is not transported, but it plays an essential structural role and its presence is essential for fluoride channel function. Its function is as follows. Fluoride-specific ion channel. Important for reducing fluoride concentration in the cell, thus reducing its toxicity. The polypeptide is Fluoride-specific ion channel FluC 1 (Bacillus cereus (strain ZK / E33L)).